We begin with the raw amino-acid sequence, 210 residues long: Large ribosomal subunit protein bL25 (210 aa).

Residues 179–210 (LPPQQEEEIHSGEQQEPGQPEAEEGRETTPEG) form a disordered region. A compositionally biased stretch (basic and acidic residues) spans 201–210 (EEGRETTPEG).

The protein belongs to the bacterial ribosomal protein bL25 family. CTC subfamily. Part of the 50S ribosomal subunit; part of the 5S rRNA/L5/L18/L25 subcomplex. Contacts the 5S rRNA. Binds to the 5S rRNA independently of L5 and L18.

In terms of biological role, this is one of the proteins that binds to the 5S RNA in the ribosome where it forms part of the central protuberance. This chain is Large ribosomal subunit protein bL25, found in Geobacillus thermodenitrificans (strain NG80-2).